The following is a 425-amino-acid chain: Paired box pox-neuro protein (425 aa).

Residues 5-132 constitute a DNA-binding region (paired); that stretch reads GQAGVNQLGG…SSINRILRNS (128 aa). The segment at 8–64 is PAI subdomain; the sequence is GVNQLGGVFVNGRPLPDCVRRRIVDLALCGVRPCDISRQLLVSHGCVSKILTRFYET. Residues 84 to 132 form an RED subdomain region; it reads TVVKKIIRLKEENSGMFAWEIREQLQQQRVCDPSSVPSISSINRILRNS. Disordered stretches follow at residues 159–188, 297–358, and 383–425; these read QAGS…AATP, TKSE…RKRN, and LESS…EVVN. Pro residues predominate over residues 172-185; the sequence is APPPPVTVAPPTPA. Low complexity-rich tracts occupy residues 323-332 and 340-349; these read SSPAALSLTA and GSAPEASPGS. Positions 402 to 425 are enriched in acidic residues; it reads TPEDEDPAEAEEEQEEEDSVEVVN.

Central and peripheral nervous systems.

It localises to the nucleus. In terms of biological role, transcriptional regulator that specifies poly-innervated organs (chemosensory bristle). Also controls the number of neurons. The protein is Paired box pox-neuro protein (Poxn) of Drosophila melanogaster (Fruit fly).